Consider the following 534-residue polypeptide: Glucans biosynthesis protein D (534 aa).

The segment at residues 1 to 30 is a signal peptide (tat-type signal); the sequence is MRMQRRHLLKNAAAALAALGLPALPQWALA.

Belongs to the OpgD/OpgG family. Post-translationally, predicted to be exported by the Tat system. The position of the signal peptide cleavage has not been experimentally proven.

It localises to the periplasm. Its pathway is glycan metabolism; osmoregulated periplasmic glucan (OPG) biosynthesis. Its function is as follows. Probably involved in the control of the structural glucose backbone of osmoregulated periplasmic glucans (OPGs). This is Glucans biosynthesis protein D from Xanthomonas oryzae pv. oryzae (strain KACC10331 / KXO85).